We begin with the raw amino-acid sequence, 161 residues long: Succinate dehydrogenase assembly factor 2, mitochondrial (161 aa).

A mitochondrion-targeting transit peptide spans 1–31 (MSLLRVTRSSGHLSAVCRLPARSISTTSILL).

Belongs to the SDHAF2 family. As to quaternary structure, interacts with the flavoprotein subunit within the SDH catalytic dimer.

It is found in the mitochondrion matrix. Plays an essential role in the assembly of succinate dehydrogenase (SDH), an enzyme complex (also referred to as respiratory complex II) that is a component of both the tricarboxylic acid (TCA) cycle and the mitochondrial electron transport chain, and which couples the oxidation of succinate to fumarate with the reduction of ubiquinone (coenzyme Q) to ubiquinol. Required for flavinylation (covalent attachment of FAD) of the flavoprotein subunit of the SDH catalytic dimer. This is Succinate dehydrogenase assembly factor 2, mitochondrial from Aedes aegypti (Yellowfever mosquito).